Here is a 143-residue protein sequence, read N- to C-terminus: Nucleoside diphosphate kinase (143 aa).

Positions 11, 59, 87, 93, 104, and 114 each coordinate ATP. The active-site Pros-phosphohistidine intermediate is His117.

The protein belongs to the NDK family. In terms of assembly, homotetramer. Requires Mg(2+) as cofactor.

It localises to the cytoplasm. The enzyme catalyses a 2'-deoxyribonucleoside 5'-diphosphate + ATP = a 2'-deoxyribonucleoside 5'-triphosphate + ADP. It carries out the reaction a ribonucleoside 5'-diphosphate + ATP = a ribonucleoside 5'-triphosphate + ADP. Functionally, major role in the synthesis of nucleoside triphosphates other than ATP. The ATP gamma phosphate is transferred to the NDP beta phosphate via a ping-pong mechanism, using a phosphorylated active-site intermediate. This Shewanella woodyi (strain ATCC 51908 / MS32) protein is Nucleoside diphosphate kinase.